The following is a 388-amino-acid chain: Mannitol-1-phosphate 5-dehydrogenase (388 aa).

4–15 (AVHFGAGNIGRG) is an NAD(+) binding site.

The protein belongs to the mannitol dehydrogenase family.

It catalyses the reaction D-mannitol 1-phosphate + NAD(+) = beta-D-fructose 6-phosphate + NADH + H(+). The chain is Mannitol-1-phosphate 5-dehydrogenase from Lactococcus lactis subsp. cremoris (strain MG1363).